The following is an 804-amino-acid chain: MAAHRPGPLKQQNKAHKGGRHRGRGSAQRDGKGRLALKTLSKKVRKELSRVDQRHRASQLRKQKKEAVLAEKRQLGGKDGPPHQVLVVPLHSRISLPEAMQLLQDRDTGTVHLNELGNTQNFMLLCPRLKHRWFFTSARPGDLHVVLDMAKVADTILFLLDPLEGWDSTGDYCLSCLFAQGLPTYTLAVQGISGLPLKKQIDTRKKLSKAVEKRFPHDKLLLLDTQQEAGMLLRQLANQKQQHLAFRDRRAYLFAHAVDFVPSEENNLVGTLKISGYVRGQTLNVNRLLHIVGYGDFQMKQIDAPGDPFPLNPRGIKPQKDPDMAMEICATDAVDDMEEGLKVLMKADPGRQESLQAEVIPDPMEGEQTWPTEEELSEAKDFLKESSKVVKKVPKGTSSYQAEWILDGGSQSGGEGDEYEYDDMEHEDFMEEESQDESSEEEEEYETMTIGESVHDDLYDKKVDEEAEAKMLEKYKQERLEEMFPDEVDTPRDVAARIRFQKYRGLKSFRTSPWDPKENLPQDYARIFQFQNFTNTRKSIFKEVEEKEVEGAEVGWYVTLHVSEVPVSVVECFRQGTPLIAFSLLPHEQKMSVLNMVVRRDPGNTEPVKAKEELIFHCGFRRFRASPLFSQHTAADKHKLQRFLTADMALVATVYAPITFPPASVLLFKQKSNGMHSLIATGHLMSVDPDRMVIKRVVLSGHPFKIFTKMAVVRYMFFNREDVLWFKPVELRTKWGRRGHIKEPLGTHGHMKCSFDGKLKSQDTVLMNLYKRVFPKWTYDPYVPEPVPWLKSEISSTVPQGGME.

Positions 1 to 67 (MAAHRPGPLK…SQLRKQKKEA (67 aa)) are disordered. Positions 13-24 (NKAHKGGRHRGR) are enriched in basic residues. Residues 46-55 (KELSRVDQRH) show a composition bias toward basic and acidic residues. Positions 81-242 (PPHQVLVVPL…LRQLANQKQQ (162 aa)) constitute a Bms1-type G domain.

This sequence belongs to the TRAFAC class translation factor GTPase superfamily. Bms1-like GTPase family. TSR1 subfamily.

It is found in the nucleus. Its subcellular location is the nucleolus. Functionally, required during maturation of the 40S ribosomal subunit in the nucleolus. This Homo sapiens (Human) protein is Pre-rRNA-processing protein TSR1 homolog (TSR1).